A 321-amino-acid polypeptide reads, in one-letter code: Phospho-N-acetylmuramoyl-pentapeptide-transferase (321 aa).

A run of 10 helical transmembrane segments spans residues Met-1–Ile-21, Met-50–Val-70, Ile-76–Ile-96, Phe-112–Val-132, Ile-140–Leu-160, Gly-176–Leu-196, Ala-200–Ile-220, Val-225–Met-245, Leu-250–Val-270, and Val-300–Val-320.

The protein belongs to the glycosyltransferase 4 family. MraY subfamily. The cofactor is Mg(2+).

The protein localises to the cell membrane. The enzyme catalyses UDP-N-acetyl-alpha-D-muramoyl-L-alanyl-gamma-D-glutamyl-L-lysyl-D-alanyl-D-alanine + di-trans,octa-cis-undecaprenyl phosphate = Mur2Ac(oyl-L-Ala-gamma-D-Glu-L-Lys-D-Ala-D-Ala)-di-trans,octa-cis-undecaprenyl diphosphate + UMP. It functions in the pathway cell wall biogenesis; peptidoglycan biosynthesis. Catalyzes the initial step of the lipid cycle reactions in the biosynthesis of the cell wall peptidoglycan: transfers peptidoglycan precursor phospho-MurNAc-pentapeptide from UDP-MurNAc-pentapeptide onto the lipid carrier undecaprenyl phosphate, yielding undecaprenyl-pyrophosphoryl-MurNAc-pentapeptide, known as lipid I. The polypeptide is Phospho-N-acetylmuramoyl-pentapeptide-transferase (Staphylococcus aureus (strain bovine RF122 / ET3-1)).